Consider the following 250-residue polypeptide: Geranylgeranylglyceryl phosphate synthase (250 aa).

Asp-23 and Ser-52 together coordinate Mg(2+). Sn-glycerol 1-phosphate-binding positions include Tyr-170 to Gly-176, Gly-202 to Gly-203, and Gly-224 to Thr-225.

The protein belongs to the GGGP/HepGP synthase family. Group II subfamily. Mg(2+) is required as a cofactor.

The protein resides in the cytoplasm. The enzyme catalyses sn-glycerol 1-phosphate + (2E,6E,10E)-geranylgeranyl diphosphate = sn-3-O-(geranylgeranyl)glycerol 1-phosphate + diphosphate. The protein operates within membrane lipid metabolism; glycerophospholipid metabolism. In terms of biological role, prenyltransferase that catalyzes the transfer of the geranylgeranyl moiety of geranylgeranyl diphosphate (GGPP) to the C3 hydroxyl of sn-glycerol-1-phosphate (G1P). This reaction is the first ether-bond-formation step in the biosynthesis of archaeal membrane lipids. This chain is Geranylgeranylglyceryl phosphate synthase, found in Methanobrevibacter smithii (strain ATCC 35061 / DSM 861 / OCM 144 / PS).